We begin with the raw amino-acid sequence, 196 residues long: uncharacterized protein (196 aa).

This is an uncharacterized protein from Caenorhabditis elegans.